The chain runs to 349 residues: UPF0283 membrane protein Ent638_2153 (349 aa).

3 helical membrane passes run 70 to 90 (MVTA…VQWT), 99 to 119 (WVAL…VGSV), and 213 to 233 (ESTL…FIAW).

The protein belongs to the UPF0283 family.

The protein localises to the cell inner membrane. The chain is UPF0283 membrane protein Ent638_2153 from Enterobacter sp. (strain 638).